The chain runs to 247 residues: 3-deoxy-manno-octulosonate cytidylyltransferase (247 aa).

Belongs to the KdsB family.

The protein resides in the cytoplasm. The enzyme catalyses 3-deoxy-alpha-D-manno-oct-2-ulosonate + CTP = CMP-3-deoxy-beta-D-manno-octulosonate + diphosphate. The protein operates within nucleotide-sugar biosynthesis; CMP-3-deoxy-D-manno-octulosonate biosynthesis; CMP-3-deoxy-D-manno-octulosonate from 3-deoxy-D-manno-octulosonate and CTP: step 1/1. It functions in the pathway bacterial outer membrane biogenesis; lipopolysaccharide biosynthesis. In terms of biological role, activates KDO (a required 8-carbon sugar) for incorporation into bacterial lipopolysaccharide in Gram-negative bacteria. The protein is 3-deoxy-manno-octulosonate cytidylyltransferase of Methylorubrum populi (strain ATCC BAA-705 / NCIMB 13946 / BJ001) (Methylobacterium populi).